A 53-amino-acid polypeptide reads, in one-letter code: Large ribosomal subunit protein eL40 (53 aa).

Belongs to the eukaryotic ribosomal protein eL40 family.

This is Large ribosomal subunit protein eL40 from Pyrobaculum arsenaticum (strain DSM 13514 / JCM 11321 / PZ6).